The following is a 266-amino-acid chain: 2-C-methyl-D-erythritol 4-phosphate cytidylyltransferase (266 aa).

The interval 229-266 is disordered; sequence NRDCGPGTRDPESAHPQSSVSASAFSGPGSRAPGPEEI. Over residues 243–252 the composition is skewed to polar residues; the sequence is HPQSSVSASA.

It belongs to the IspD/TarI cytidylyltransferase family. IspD subfamily.

The enzyme catalyses 2-C-methyl-D-erythritol 4-phosphate + CTP + H(+) = 4-CDP-2-C-methyl-D-erythritol + diphosphate. It participates in isoprenoid biosynthesis; isopentenyl diphosphate biosynthesis via DXP pathway; isopentenyl diphosphate from 1-deoxy-D-xylulose 5-phosphate: step 2/6. In terms of biological role, catalyzes the formation of 4-diphosphocytidyl-2-C-methyl-D-erythritol from CTP and 2-C-methyl-D-erythritol 4-phosphate (MEP). This chain is 2-C-methyl-D-erythritol 4-phosphate cytidylyltransferase, found in Xanthomonas axonopodis pv. citri (strain 306).